The following is an 860-amino-acid chain: Leucine--tRNA ligase (860 aa).

The short motif at Pro-42–His-52 is the 'HIGH' region element. The 'KMSKS' region signature appears at Lys-619–Ser-623. Residue Lys-622 participates in ATP binding.

This sequence belongs to the class-I aminoacyl-tRNA synthetase family.

It is found in the cytoplasm. It carries out the reaction tRNA(Leu) + L-leucine + ATP = L-leucyl-tRNA(Leu) + AMP + diphosphate. In Escherichia coli O81 (strain ED1a), this protein is Leucine--tRNA ligase.